Here is a 475-residue protein sequence, read N- to C-terminus: Citrate synthase, mitochondrial (475 aa).

Catalysis depends on residues H310, H356, and D411.

It belongs to the citrate synthase family.

It is found in the mitochondrion matrix. The catalysed reaction is oxaloacetate + acetyl-CoA + H2O = citrate + CoA + H(+). It participates in carbohydrate metabolism; tricarboxylic acid cycle; isocitrate from oxaloacetate: step 1/2. The protein is Citrate synthase, mitochondrial (cit-1) of Aspergillus niger.